Here is a 207-residue protein sequence, read N- to C-terminus: Outer-membrane lipoprotein LolB (207 aa).

The first 21 residues, 1-21 (MPLPDFRLIRLLPLAALVLTA), serve as a signal peptide directing secretion. Residue Cys-22 is the site of N-palmitoyl cysteine attachment. Residue Cys-22 is the site of S-diacylglycerol cysteine attachment.

Belongs to the LolB family. Monomer.

The protein localises to the cell outer membrane. In terms of biological role, plays a critical role in the incorporation of lipoproteins in the outer membrane after they are released by the LolA protein. The chain is Outer-membrane lipoprotein LolB from Escherichia coli O7:K1 (strain IAI39 / ExPEC).